A 393-amino-acid polypeptide reads, in one-letter code: Pyridinium-3,5-bisthiocarboxylic acid mononucleotide nickel insertion protein (393 aa).

The protein belongs to the LarC family.

It catalyses the reaction Ni(II)-pyridinium-3,5-bisthiocarboxylate mononucleotide = pyridinium-3,5-bisthiocarboxylate mononucleotide + Ni(2+). Its function is as follows. Involved in the biosynthesis of a nickel-pincer cofactor ((SCS)Ni(II) pincer complex). Binds Ni(2+), and functions in nickel delivery to pyridinium-3,5-bisthiocarboxylic acid mononucleotide (P2TMN), to form the mature cofactor. Is thus probably required for the activation of nickel-pincer cofactor-dependent enzymes. The chain is Pyridinium-3,5-bisthiocarboxylic acid mononucleotide nickel insertion protein from Nocardioides sp. (strain ATCC BAA-499 / JS614).